The sequence spans 311 residues: Exosome complex component Rrp4 (311 aa).

The S1 motif domain maps to 63-131 (GDVVIGEITD…EVKKVKLGLK (69 aa)). The KH domain occupies 139 to 197 (RDGILVYITPTKVPRLIGKRGSMINMVKEKTHCDIVVGQNGVVWIKGEPDMERIAEKVV). Residues 222–311 (GVEPEIQVEE…EVKDENNSER (90 aa)) are disordered. Residues 241 to 300 (PESEDFEEASDYSEDVEVSPESEDIEEVSDESEDLEVESEDVEEGTDTPAAEEDDGEAGD) are compositionally biased toward acidic residues. Residues 301–311 (AEVKDENNSER) are compositionally biased toward basic and acidic residues.

Belongs to the RRP4 family. Component of the archaeal exosome complex. Forms a trimer of Rrp4 and/or Csl4 subunits. The trimer associates with a hexameric ring-like arrangement composed of 3 Rrp41-Rrp42 heterodimers.

The protein localises to the cytoplasm. Its function is as follows. Non-catalytic component of the exosome, which is a complex involved in RNA degradation. Increases the RNA binding and the efficiency of RNA degradation. Confers strong poly(A) specificity to the exosome. This Methanothermobacter thermautotrophicus (strain ATCC 29096 / DSM 1053 / JCM 10044 / NBRC 100330 / Delta H) (Methanobacterium thermoautotrophicum) protein is Exosome complex component Rrp4.